A 157-amino-acid polypeptide reads, in one-letter code: Urease accessory protein UreE (157 aa).

This sequence belongs to the UreE family.

The protein localises to the cytoplasm. Involved in urease metallocenter assembly. Binds nickel. Probably functions as a nickel donor during metallocenter assembly. This Corynebacterium glutamicum (strain ATCC 13032 / DSM 20300 / JCM 1318 / BCRC 11384 / CCUG 27702 / LMG 3730 / NBRC 12168 / NCIMB 10025 / NRRL B-2784 / 534) protein is Urease accessory protein UreE.